The sequence spans 77 residues: Large ribosomal subunit protein eL20 (77 aa).

Belongs to the eukaryotic ribosomal protein eL20 family. Part of the 50S ribosomal subunit. Binds 23S rRNA.

The polypeptide is Large ribosomal subunit protein eL20 (Pyrococcus horikoshii (strain ATCC 700860 / DSM 12428 / JCM 9974 / NBRC 100139 / OT-3)).